A 219-amino-acid polypeptide reads, in one-letter code: Thymidylate kinase (219 aa).

Residue 9 to 16 (GIEGSGKT) coordinates ATP.

This sequence belongs to the thymidylate kinase family.

It carries out the reaction dTMP + ATP = dTDP + ADP. In terms of biological role, phosphorylation of dTMP to form dTDP in both de novo and salvage pathways of dTTP synthesis. In Pelobacter propionicus (strain DSM 2379 / NBRC 103807 / OttBd1), this protein is Thymidylate kinase.